A 241-amino-acid polypeptide reads, in one-letter code: Eukaryotic translation initiation factor 3 subunit J (241 aa).

Positions 1–97 are disordered; that stretch reads MEEDWEQLSE…EEEDMTPEQK (97 aa). Residues 28-45 are compositionally biased toward acidic residues; sequence GEDEEEEVKDSWEDEDEL. Residues 31–119 are a coiled coil; sequence EEEEVKDSWE…ESDLKNALDT (89 aa). Composition is skewed to basic and acidic residues over residues 46-58 and 69-87; these read EEKK…ETPK and IADK…RLEK.

This sequence belongs to the eIF-3 subunit J family. As to quaternary structure, component of the eukaryotic translation initiation factor 3 (eIF-3) complex.

It is found in the cytoplasm. In terms of biological role, component of the eukaryotic translation initiation factor 3 (eIF-3) complex, which is involved in protein synthesis of a specialized repertoire of mRNAs and, together with other initiation factors, stimulates binding of mRNA and methionyl-tRNAi to the 40S ribosome. The eIF-3 complex specifically targets and initiates translation of a subset of mRNAs involved in cell proliferation. This chain is Eukaryotic translation initiation factor 3 subunit J, found in Aedes aegypti (Yellowfever mosquito).